The sequence spans 468 residues: PE family protein PE3 (468 aa).

The 92-residue stretch at 1–92 (MSYVIAAPEM…AGAAYAQAEA (92 aa)) folds into the PE domain. The 222-residue stretch at 154–375 (PVAQYTPEQW…DLRVLVDLGY (222 aa)) folds into the PE-PPE domain.

The protein belongs to the mycobacterial PE family.

The protein resides in the secreted. It is found in the cell wall. Functionally, plays significant roles in mycobacterial persistence during infection and modulates host immune response. In Mycobacterium tuberculosis (strain ATCC 25618 / H37Rv), this protein is PE family protein PE3.